Reading from the N-terminus, the 259-residue chain is 3-deoxy-manno-octulosonate cytidylyltransferase (259 aa).

This sequence belongs to the KdsB family.

It is found in the cytoplasm. It catalyses the reaction 3-deoxy-alpha-D-manno-oct-2-ulosonate + CTP = CMP-3-deoxy-beta-D-manno-octulosonate + diphosphate. Its pathway is nucleotide-sugar biosynthesis; CMP-3-deoxy-D-manno-octulosonate biosynthesis; CMP-3-deoxy-D-manno-octulosonate from 3-deoxy-D-manno-octulosonate and CTP: step 1/1. It participates in bacterial outer membrane biogenesis; lipopolysaccharide biosynthesis. Functionally, activates KDO (a required 8-carbon sugar) for incorporation into bacterial lipopolysaccharide in Gram-negative bacteria. The sequence is that of 3-deoxy-manno-octulosonate cytidylyltransferase from Xanthomonas euvesicatoria pv. vesicatoria (strain 85-10) (Xanthomonas campestris pv. vesicatoria).